A 1090-amino-acid polypeptide reads, in one-letter code: Vinculin (1090 aa).

2 consecutive repeat copies span residues 339 to 446 (DADN…SQNS) and 455 to 561 (QNAQ…DLGD). The 2 X repeats stretch occupies residues 339-561 (DADNVTVMRK…LKNALRDLGD (223 aa)). Disordered stretches follow at residues 811-842 (GVPM…SQVI) and 864-895 (DIPA…EEET). The span at 817–830 (GRHSSYQESISRAS) shows a compositional bias: polar residues. Pro residues predominate over residues 866–887 (PAPPRPPPPVELSPPPRPPPPP).

The protein belongs to the vinculin/alpha-catenin family. May interact with sorb-1. Expressed in gonadal sheath cells and the spermatheca. Expressed in body wall muscles.

It localises to the cytoplasm. Its subcellular location is the cytoskeleton. It is found in the cell junction. The protein resides in the adherens junction. The protein localises to the cell membrane. It localises to the focal adhesion. Its function is as follows. Involved in cell adhesion. May be involved in the attachment of the actin-based microfilaments to the plasma membrane. Involved in ovulation. This chain is Vinculin, found in Caenorhabditis elegans.